The sequence spans 523 residues: MSTDDGRRPIRRALISVYDKTGLVDLAQGLSAAGVEIISTGSTAKTIADTGIPVTPVEQLTGFPEVLDGRVKTLHPRVHAGLLADLRKSEHAAALEQLGIEAFELVVVNLYPFSQTVESGASVDDCVEQIDIGGPAMVRAAAKNHPSAAVVTDPLGYHGVLAALRAGGFTLAERKRLASLAFQHIAEYDIAVASWMQQTLAPEHPVAAFPQWFGRSWRRVAMLRYGENPHQQAALYGDPTAWPGLAQAEQLHGKDMSYNNFTDADAAWRAAFDHEQTCVAIIKHANPCGIAISSVSVADAHRKAHECDPLSAYGGVIAANTEVSVEMAEYVSTIFTEVIVAPGYAPGALDVLARKKNIRVLVAAEPLAGGSELRPISGGLLIQQSDQLDAHGDNPANWTLATGSPADPATLTDLVFAWRACRAVKSNAIVIAADGATVGVGMGQVNRVDAARLAVERGGERVRGAVAASDAFFPFPDGLETLAAAGVTAVVHPGGSVRDEEVTEAAAKAGVTLYLTGARHFAH.

The MGS-like domain maps to 1-152 (MSTDDGRRPI…KNHPSAAVVT (152 aa)).

This sequence belongs to the PurH family.

The enzyme catalyses (6R)-10-formyltetrahydrofolate + 5-amino-1-(5-phospho-beta-D-ribosyl)imidazole-4-carboxamide = 5-formamido-1-(5-phospho-D-ribosyl)imidazole-4-carboxamide + (6S)-5,6,7,8-tetrahydrofolate. The catalysed reaction is IMP + H2O = 5-formamido-1-(5-phospho-D-ribosyl)imidazole-4-carboxamide. The protein operates within purine metabolism; IMP biosynthesis via de novo pathway; 5-formamido-1-(5-phospho-D-ribosyl)imidazole-4-carboxamide from 5-amino-1-(5-phospho-D-ribosyl)imidazole-4-carboxamide (10-formyl THF route): step 1/1. It functions in the pathway purine metabolism; IMP biosynthesis via de novo pathway; IMP from 5-formamido-1-(5-phospho-D-ribosyl)imidazole-4-carboxamide: step 1/1. In Mycobacterium bovis (strain BCG / Pasteur 1173P2), this protein is Bifunctional purine biosynthesis protein PurH.